Consider the following 600-residue polypeptide: ATP-dependent lipid A-core flippase (600 aa).

6 consecutive transmembrane segments (helical) span residues threonine 28–isoleucine 48, valine 80–phenylalanine 100, alanine 159–phenylalanine 179, tryptophan 182–valine 202, valine 267–alanine 287, and glutamate 295–isoleucine 315. An ABC transmembrane type-1 domain is found at leucine 29–arginine 327. An ABC transporter domain is found at leucine 359 to methionine 596. Glycine 393 to serine 400 lines the ATP pocket.

It belongs to the ABC transporter superfamily. Lipid exporter (TC 3.A.1.106) family. In terms of assembly, homodimer.

The protein localises to the cell inner membrane. It carries out the reaction ATP + H2O + lipid A-core oligosaccharideSide 1 = ADP + phosphate + lipid A-core oligosaccharideSide 2.. In terms of biological role, involved in lipopolysaccharide (LPS) biosynthesis. Translocates lipid A-core from the inner to the outer leaflet of the inner membrane. Transmembrane domains (TMD) form a pore in the inner membrane and the ATP-binding domain (NBD) is responsible for energy generation. This chain is ATP-dependent lipid A-core flippase, found in Shewanella denitrificans (strain OS217 / ATCC BAA-1090 / DSM 15013).